A 258-amino-acid polypeptide reads, in one-letter code: Ribosomal RNA small subunit methyltransferase A (258 aa).

S-adenosyl-L-methionine is bound by residues His9, Leu11, Gly36, Glu57, Asp83, and Asn102.

Belongs to the class I-like SAM-binding methyltransferase superfamily. rRNA adenine N(6)-methyltransferase family. RsmA subfamily.

It is found in the cytoplasm. The enzyme catalyses adenosine(1518)/adenosine(1519) in 16S rRNA + 4 S-adenosyl-L-methionine = N(6)-dimethyladenosine(1518)/N(6)-dimethyladenosine(1519) in 16S rRNA + 4 S-adenosyl-L-homocysteine + 4 H(+). Specifically dimethylates two adjacent adenosines (A1518 and A1519) in the loop of a conserved hairpin near the 3'-end of 16S rRNA in the 30S particle. May play a critical role in biogenesis of 30S subunits. The sequence is that of Ribosomal RNA small subunit methyltransferase A from Caulobacter vibrioides (strain ATCC 19089 / CIP 103742 / CB 15) (Caulobacter crescentus).